The sequence spans 714 residues: ATP-dependent zinc metalloprotease FtsH (714 aa).

Residues 1 to 75 (MEKPRRLRPR…KNPMEPRQQQ (75 aa)) are Cytoplasmic-facing. The chain crosses the membrane as a helical span at residues 76-96 (FSLWYVLVTILAMLAIQTLFV). Residues 97-188 (SGHVETIPYS…FVGQPDNKWL (92 aa)) lie on the Periplasmic side of the membrane. A helical membrane pass occupies residues 189-209 (STILSWVVPAVIFFGIWSFLI). Residues 210 to 714 (KRVGGAAGSM…GKPDQKTQGT (505 aa)) lie on the Cytoplasmic side of the membrane. 280-287 (GAPGTGKT) lines the ATP pocket. Residue His502 participates in Zn(2+) binding. The active site involves Glu503. Residues His506 and Asp579 each contribute to the Zn(2+) site. Residues 688–714 (PMPPPKPVANIEESTATGKPDQKTQGT) are disordered. Residues 699–714 (EESTATGKPDQKTQGT) show a composition bias toward polar residues.

In the central section; belongs to the AAA ATPase family. The protein in the C-terminal section; belongs to the peptidase M41 family. Homohexamer. Zn(2+) is required as a cofactor.

It is found in the cell inner membrane. In terms of biological role, acts as a processive, ATP-dependent zinc metallopeptidase for both cytoplasmic and membrane proteins. Plays a role in the quality control of integral membrane proteins. This Ralstonia pickettii (strain 12J) protein is ATP-dependent zinc metalloprotease FtsH.